Reading from the N-terminus, the 524-residue chain is Glutamyl-tRNA(Gln) amidotransferase subunit A, mitochondrial (524 aa).

Residues K76 and S171 each act as charge relay system in the active site. The active-site Acyl-ester intermediate is S195.

The protein belongs to the amidase family. GatA subfamily. As to quaternary structure, subunit of the heterotrimeric GatCAB amidotransferase (AdT) complex, composed of A (qrsl1), B (gatb) and C (gatc) subunits.

The protein localises to the mitochondrion. The catalysed reaction is L-glutamyl-tRNA(Gln) + L-glutamine + ATP + H2O = L-glutaminyl-tRNA(Gln) + L-glutamate + ADP + phosphate + H(+). In terms of biological role, allows the formation of correctly charged Gln-tRNA(Gln) through the transamidation of misacylated Glu-tRNA(Gln) in the mitochondria. The reaction takes place in the presence of glutamine and ATP through an activated gamma-phospho-Glu-tRNA(Gln). The polypeptide is Glutamyl-tRNA(Gln) amidotransferase subunit A, mitochondrial (qrsl1) (Xenopus tropicalis (Western clawed frog)).